The chain runs to 134 residues: C-C motif chemokine 21 (134 aa).

Residues 1-23 form the signal peptide; it reads MAQSLALSLLILVLAFGIPRTQG. Intrachain disulfides connect C31/C57, C32/C75, and C103/C122. Residues 88–134 are disordered; that stretch reads QHLDKTPSPQKPAQGCRKDRGASKTGKKGKGSKGCKRTERSQTPKGP. Residues 98-134 are C-terminal basic extension; it reads KPAQGCRKDRGASKTGKKGKGSKGCKRTERSQTPKGP. The segment covering 112 to 122 has biased composition (basic residues); that stretch reads TGKKGKGSKGC. The segment covering 123 to 134 has biased composition (basic and acidic residues); that stretch reads KRTERSQTPKGP.

This sequence belongs to the intercrine beta (chemokine CC) family. In terms of assembly, monomer. Binds to CCR7. Interacts with PDPN; relocalizes PDPN to the basolateral membrane. Interacts with TNFAIP6 (via Link domain). Interacts with GPR174. Highly expressed in high endothelial venules of lymph nodes, spleen and appendix. Intermediate levels found in small intestine, thyroid gland and trachea. Low level expression in thymus, bone marrow, liver, and pancreas. Also found in tonsil, fetal heart and fetal spleen.

The protein resides in the secreted. In terms of biological role, inhibits hemopoiesis and stimulates chemotaxis. Chemotactic in vitro for thymocytes and activated T-cells, but not for B-cells, macrophages, or neutrophils. Shows preferential activity towards naive T-cells. May play a role in mediating homing of lymphocytes to secondary lymphoid organs. Binds to atypical chemokine receptor ACKR4 and mediates the recruitment of beta-arrestin (ARRB1/2) to ACKR4. The sequence is that of C-C motif chemokine 21 (CCL21) from Homo sapiens (Human).